The sequence spans 381 residues: Hps1-dma1 cluster transcription factor tfc7 (381 aa).

Positions Cys-10 to Cys-37 form a DNA-binding region, zn(2)-C6 fungal-type. The disordered stretch occupies residues Arg-41–Met-88. Polar residues-rich tracts occupy residues Arg-50–Ile-59 and Arg-67–Ser-80.

The protein localises to the nucleus. Functionally, transcription factor that regulates the expression of the hps1-dma1 gene cluster that probably mediates the biosynthesis a derivative of cyclopiazonic acid (CPA). Further studies are required to whether the CPA-like hps1-dma1 cluster is functional or a non-functional relic reflecting evolution of D.septosporum. This Dothistroma septosporum (strain NZE10 / CBS 128990) (Red band needle blight fungus) protein is Hps1-dma1 cluster transcription factor tfc7 (tfc7).